The chain runs to 304 residues: Probable aspartoacylase (304 aa).

The Zn(2+) site is built by His13 and Glu16. Residues Arg55 and 62–63 (NR) contribute to the substrate site. His105 is a Zn(2+) binding site. Positions 163 and 273 each coordinate substrate.

The protein belongs to the AspA/AstE family. Aspartoacylase subfamily. Zn(2+) serves as cofactor.

The catalysed reaction is an N-acyl-L-aspartate + H2O = a carboxylate + L-aspartate. In Prochlorococcus marinus (strain MIT 9313), this protein is Probable aspartoacylase.